The chain runs to 268 residues: tRNA pseudouridine synthase A (268 aa).

The active-site Nucleophile is aspartate 52. Tyrosine 110 provides a ligand contact to substrate.

It belongs to the tRNA pseudouridine synthase TruA family. Homodimer.

It catalyses the reaction uridine(38/39/40) in tRNA = pseudouridine(38/39/40) in tRNA. Its function is as follows. Formation of pseudouridine at positions 38, 39 and 40 in the anticodon stem and loop of transfer RNAs. This Prochlorococcus marinus (strain AS9601) protein is tRNA pseudouridine synthase A.